We begin with the raw amino-acid sequence, 123 residues long: UPF0102 protein Dole_2298 (123 aa).

It belongs to the UPF0102 family.

The sequence is that of UPF0102 protein Dole_2298 from Desulfosudis oleivorans (strain DSM 6200 / JCM 39069 / Hxd3) (Desulfococcus oleovorans).